A 209-amino-acid polypeptide reads, in one-letter code: Protein GrpE (209 aa).

Basic and acidic residues-rich tracts occupy residues 1 to 16 (MKKS…KEES) and 34 to 44 (KAGEKTAEPEK). The interval 1–61 (MKKSTKKEST…EKSPEAACRE (61 aa)) is disordered.

Belongs to the GrpE family. Homodimer.

The protein resides in the cytoplasm. Functionally, participates actively in the response to hyperosmotic and heat shock by preventing the aggregation of stress-denatured proteins, in association with DnaK and GrpE. It is the nucleotide exchange factor for DnaK and may function as a thermosensor. Unfolded proteins bind initially to DnaJ; upon interaction with the DnaJ-bound protein, DnaK hydrolyzes its bound ATP, resulting in the formation of a stable complex. GrpE releases ADP from DnaK; ATP binding to DnaK triggers the release of the substrate protein, thus completing the reaction cycle. Several rounds of ATP-dependent interactions between DnaJ, DnaK and GrpE are required for fully efficient folding. This Methanosarcina acetivorans (strain ATCC 35395 / DSM 2834 / JCM 12185 / C2A) protein is Protein GrpE.